A 179-amino-acid chain; its full sequence is Ubiquitin-conjugating enzyme E2 C (179 aa).

A2 is modified (N-acetylalanine). S3 carries the phosphoserine modification. The UBC core domain occupies 30-175 (PVGKRLQQEL…LQETYSKQVS (146 aa)). The Glycyl thioester intermediate role is filled by C114.

It belongs to the ubiquitin-conjugating enzyme family. Component of the APC/C complex, composed of at least 14 distinct subunits that assemble into a complex of at least 19 chains with a combined molecular mass of around 1.2 MDa. Within this complex, directly interacts with ANAPC2. Autoubiquitinated by the APC/C complex, leading to its degradation by the proteasome. Its degradation plays a central role in APC/C regulation, allowing cyclin-A accumulation before S phase entry. APC/C substrates inhibit the autoubiquitination of UBE2C/UBCH10 but not its E2 function, hence APC/C remaining active until its substrates have been destroyed.

The enzyme catalyses S-ubiquitinyl-[E1 ubiquitin-activating enzyme]-L-cysteine + [E2 ubiquitin-conjugating enzyme]-L-cysteine = [E1 ubiquitin-activating enzyme]-L-cysteine + S-ubiquitinyl-[E2 ubiquitin-conjugating enzyme]-L-cysteine.. The catalysed reaction is S-ubiquitinyl-[E1 ubiquitin-activating enzyme]-L-cysteine + [acceptor protein]-L-lysine = [E1 ubiquitin-activating enzyme]-L-cysteine + N(6)-monoubiquitinyl-[acceptor protein]-L-lysine.. It participates in protein modification; protein ubiquitination. Its function is as follows. Accepts ubiquitin from the E1 complex and catalyzes its covalent attachment to other proteins. In vitro catalyzes 'Lys-11'- and 'Lys-48'-linked polyubiquitination. Acts as an essential factor of the anaphase promoting complex/cyclosome (APC/C), a cell cycle-regulated ubiquitin ligase that controls progression through mitosis. Acts by initiating 'Lys-11'-linked polyubiquitin chains on APC/C substrates, leading to the degradation of APC/C substrates by the proteasome and promoting mitotic exit. The polypeptide is Ubiquitin-conjugating enzyme E2 C (Ube2c) (Mus musculus (Mouse)).